The sequence spans 358 residues: UPF0421 protein BT9727_2513 (358 aa).

4 helical membrane passes run 19–39 (IAVF…IFAV), 74–94 (FTFF…FTIV), 109–129 (TLTA…AFLI), and 131–151 (LATT…ILPP).

This sequence belongs to the UPF0421 family.

Its subcellular location is the cell membrane. This Bacillus thuringiensis subsp. konkukian (strain 97-27) protein is UPF0421 protein BT9727_2513.